The primary structure comprises 245 residues: 1-(5-phosphoribosyl)-5-[(5-phosphoribosylamino)methylideneamino] imidazole-4-carboxamide isomerase (245 aa).

Aspartate 7 (proton acceptor) is an active-site residue. Catalysis depends on aspartate 129, which acts as the Proton donor.

It belongs to the HisA/HisF family.

It localises to the cytoplasm. It catalyses the reaction 1-(5-phospho-beta-D-ribosyl)-5-[(5-phospho-beta-D-ribosylamino)methylideneamino]imidazole-4-carboxamide = 5-[(5-phospho-1-deoxy-D-ribulos-1-ylimino)methylamino]-1-(5-phospho-beta-D-ribosyl)imidazole-4-carboxamide. The protein operates within amino-acid biosynthesis; L-histidine biosynthesis; L-histidine from 5-phospho-alpha-D-ribose 1-diphosphate: step 4/9. This is 1-(5-phosphoribosyl)-5-[(5-phosphoribosylamino)methylideneamino] imidazole-4-carboxamide isomerase from Salmonella heidelberg (strain SL476).